The primary structure comprises 593 residues: Polyphenol oxidase, chloroplastic (593 aa).

Positions 1 to 13 are enriched in low complexity; the sequence is MTSLSPPVVTTPT. The disordered stretch occupies residues 1-34; the sequence is MTSLSPPVVTTPTVPNPATKPLSPFSQNNSQVSL. The N-terminal 89 residues, 1-89, are a transit peptide targeting the chloroplast; the sequence is MTSLSPPVVT…GMGTDPFAFA (89 aa). Residues 24–34 are compositionally biased toward polar residues; sequence PFSQNNSQVSL. 2 cysteine pairs are disulfide-bonded: Cys-100/Cys-115 and Cys-114/Cys-176. Cu cation contacts are provided by His-175, His-196, His-205, His-327, His-331, and His-361. Residues 179 to 196 constitute a cross-link (2'-(S-cysteinyl)-histidine (Cys-His)); sequence CDGAYDQVGFPELELQIH.

It belongs to the tyrosinase family. The cofactor is Cu(2+).

It localises to the plastid. Its subcellular location is the chloroplast thylakoid lumen. It catalyses the reaction 2 catechol + O2 = 2 1,2-benzoquinone + 2 H2O. Its function is as follows. Catalyzes the oxidation of mono- and o-diphenols to o-diquinones. The polypeptide is Polyphenol oxidase, chloroplastic (Malus domestica (Apple)).